Consider the following 328-residue polypeptide: UPF0421 protein SE_1574 (328 aa).

4 helical membrane-spanning segments follow: residues Leu26–Ile46, Leu61–Gln81, Ala109–Phe129, and Leu132–Pro152.

This sequence belongs to the UPF0421 family.

Its subcellular location is the cell membrane. This Staphylococcus epidermidis (strain ATCC 12228 / FDA PCI 1200) protein is UPF0421 protein SE_1574.